The chain runs to 380 residues: Chaperone protein DnaJ (380 aa).

The 65-residue stretch at 5–69 (DLYKVLGVEK…QKRAQYDQFG (65 aa)) folds into the J domain. Residues 140 to 222 (GKKTTITYNR…CGGSGHTEQS (83 aa)) form a CR-type zinc finger. Residues Cys-153, Cys-156, Cys-170, Cys-173, Cys-196, Cys-199, Cys-210, and Cys-213 each contribute to the Zn(2+) site. CXXCXGXG motif repeat units lie at residues 153–160 (CETCGGSG), 170–177 (CSKCHGAG), 196–203 (CDVCHGTG), and 210–217 (CATCGGSG).

This sequence belongs to the DnaJ family. In terms of assembly, homodimer. The cofactor is Zn(2+).

The protein resides in the cytoplasm. Functionally, participates actively in the response to hyperosmotic and heat shock by preventing the aggregation of stress-denatured proteins and by disaggregating proteins, also in an autonomous, DnaK-independent fashion. Unfolded proteins bind initially to DnaJ; upon interaction with the DnaJ-bound protein, DnaK hydrolyzes its bound ATP, resulting in the formation of a stable complex. GrpE releases ADP from DnaK; ATP binding to DnaK triggers the release of the substrate protein, thus completing the reaction cycle. Several rounds of ATP-dependent interactions between DnaJ, DnaK and GrpE are required for fully efficient folding. Also involved, together with DnaK and GrpE, in the DNA replication of plasmids through activation of initiation proteins. This chain is Chaperone protein DnaJ, found in Lactiplantibacillus plantarum (strain ATCC BAA-793 / NCIMB 8826 / WCFS1) (Lactobacillus plantarum).